A 156-amino-acid polypeptide reads, in one-letter code: Small ribosomal subunit protein uS7 (156 aa).

Belongs to the universal ribosomal protein uS7 family. Part of the 30S ribosomal subunit. Contacts proteins S9 and S11.

Its function is as follows. One of the primary rRNA binding proteins, it binds directly to 16S rRNA where it nucleates assembly of the head domain of the 30S subunit. Is located at the subunit interface close to the decoding center, probably blocks exit of the E-site tRNA. In Brucella anthropi (strain ATCC 49188 / DSM 6882 / CCUG 24695 / JCM 21032 / LMG 3331 / NBRC 15819 / NCTC 12168 / Alc 37) (Ochrobactrum anthropi), this protein is Small ribosomal subunit protein uS7.